A 686-amino-acid chain; its full sequence is Band 4.1-like protein 4A (686 aa).

The 289-residue stretch at 11–299 (FYCEVLLLDE…EHHTFFRMPD (289 aa)) folds into the FERM domain. Position 304 is a phosphoserine (serine 304). Composition is skewed to polar residues over residues 332 to 346 (DLSI…NVVR) and 357 to 382 (AQTQ…NEGT). Residues 332–669 (DLSIQLPRPN…LSTINPAGKP (338 aa)) form a disordered region. Phosphoserine is present on residues serine 389, serine 393, and serine 402. Composition is skewed to polar residues over residues 418–428 (GPQSGLYNSSS) and 442–455 (RNLS…SSQL). A compositionally biased stretch (low complexity) spans 479-489 (RCNTSSGSESE). Basic and acidic residues-rich tracts occupy residues 518–527 (VLRRQKEKNQ) and 547–561 (QAKE…KELV). Residues 588-601 (IRHSHSPRSYRQYR) are compositionally biased toward basic residues. Residues 648–658 (GSKDSLIEEKS) are compositionally biased toward basic and acidic residues.

In terms of tissue distribution, brain, heart, lung, liver and spleen. Not detected in thymus and kidney.

The protein localises to the cytoplasm. It is found in the cytoskeleton. This chain is Band 4.1-like protein 4A, found in Mus musculus (Mouse).